Here is a 720-residue protein sequence, read N- to C-terminus: Heat shock protein homolog pss1 (720 aa).

Ser-38 carries the phosphoserine modification. Thr-39 carries the phosphothreonine modification. The span at 658–690 (KRQKVQAEREAAKAATKSEAEKQKPSGKFEEGT) shows a compositional bias: basic and acidic residues. The interval 658–720 (KRQKVQAERE…ETMEIDEQKE (63 aa)) is disordered. Residues 703–720 (VAPENEEVETMEIDEQKE) are compositionally biased toward acidic residues.

The protein belongs to the heat shock protein 70 family.

It localises to the cytoplasm. Functionally, required for normal growth at various temperatures. The chain is Heat shock protein homolog pss1 (pss1) from Schizosaccharomyces pombe (strain 972 / ATCC 24843) (Fission yeast).